Consider the following 423-residue polypeptide: Subtilisin-like protease 2 (423 aa).

An N-terminal signal peptide occupies residues 1–17; that stretch reads MQLLNLGLLLLLPFVAG. Residues 18–123 constitute a propeptide that is removed on maturation; the sequence is EIAPQPEPLR…VHPDQHVYLA (106 aa). Positions 37–123 constitute an Inhibitor I9 domain; that stretch reads QYIVTLKEGL…VHPDQHVYLA (87 aa). In terms of domain architecture, Peptidase S8 spans 132-423; that stretch reads RWGLGYMSSK…RKFTLPKNTK (292 aa). Active-site charge relay system residues include aspartate 170 and histidine 202. N-linked (GlcNAc...) asparagine glycans are attached at residues asparagine 249, asparagine 262, and asparagine 349. Residue serine 358 is the Charge relay system of the active site. A glycan (N-linked (GlcNAc...) asparagine) is linked at asparagine 389.

It belongs to the peptidase S8 family.

It localises to the secreted. In terms of biological role, secreted subtilisin-like serine protease with keratinolytic activity that contributes to pathogenicity. This is Subtilisin-like protease 2 (SUB2) from Arthroderma otae (strain ATCC MYA-4605 / CBS 113480) (Microsporum canis).